The primary structure comprises 138 residues: ATP synthase epsilon chain (138 aa).

The protein belongs to the ATPase epsilon chain family. In terms of assembly, F-type ATPases have 2 components, CF(1) - the catalytic core - and CF(0) - the membrane proton channel. CF(1) has five subunits: alpha(3), beta(3), gamma(1), delta(1), epsilon(1). CF(0) has three main subunits: a, b and c.

The protein localises to the cell inner membrane. In terms of biological role, produces ATP from ADP in the presence of a proton gradient across the membrane. This chain is ATP synthase epsilon chain, found in Polaromonas sp. (strain JS666 / ATCC BAA-500).